Consider the following 85-residue polypeptide: Toxin AahP1005 (85 aa).

An N-terminal signal peptide occupies residues 1–19; sequence MNYLVMISLALLFMTGVES. The LCN-type CS-alpha/beta domain occupies 21–83; the sequence is KDGYIVDDKN…VSTKKKGGCN (63 aa). 4 disulfides stabilise this stretch: Cys-31-Cys-82, Cys-35-Cys-55, Cys-41-Cys-65, and Cys-45-Cys-67. Asn-83 carries the asparagine amide modification.

The protein belongs to the long (4 C-C) scorpion toxin superfamily. Sodium channel inhibitor family. Alpha subfamily. Expressed by the venom gland.

The protein localises to the secreted. Alpha toxins bind voltage-independently at site-3 of sodium channels (Nav) and inhibit the inactivation of the activated channels, thereby blocking neuronal transmission. This is Toxin AahP1005 from Androctonus australis (Sahara scorpion).